Reading from the N-terminus, the 69-residue chain is Putative membrane protein insertion efficiency factor (69 aa).

It belongs to the UPF0161 family.

The protein localises to the cell inner membrane. Could be involved in insertion of integral membrane proteins into the membrane. The polypeptide is Putative membrane protein insertion efficiency factor (Nitrosomonas europaea (strain ATCC 19718 / CIP 103999 / KCTC 2705 / NBRC 14298)).